The chain runs to 289 residues: Nitrogenase iron protein (289 aa).

Position 8-15 (8-15 (GKGGIGKS)) interacts with ATP. C96 provides a ligand contact to [4Fe-4S] cluster. R99 is subject to ADP-ribosylarginine; by dinitrogenase reductase ADP-ribosyltransferase. C130 lines the [4Fe-4S] cluster pocket.

It belongs to the NifH/BchL/ChlL family. Homodimer. Requires [4Fe-4S] cluster as cofactor. The reversible ADP-ribosylation of Arg-99 inactivates the nitrogenase reductase and regulates nitrogenase activity.

The enzyme catalyses N2 + 8 reduced [2Fe-2S]-[ferredoxin] + 16 ATP + 16 H2O = H2 + 8 oxidized [2Fe-2S]-[ferredoxin] + 2 NH4(+) + 16 ADP + 16 phosphate + 6 H(+). In terms of biological role, the key enzymatic reactions in nitrogen fixation are catalyzed by the nitrogenase complex, which has 2 components: the iron protein and the molybdenum-iron protein. In Parafrankia sp. (strain EAN1pec), this protein is Nitrogenase iron protein.